Here is a 125-residue protein sequence, read N- to C-terminus: Calcitonin receptor-stimulating peptide 1 (125 aa).

A signal peptide spans 1 to 25 (MGFWKFPPFLVLSILVLYQAGMFHA). A propeptide spanning residues 26–77 (APFRSVFDGRFDPATLDEEESRLLLAAMVNDYEQMRTRESEKAQKTEGSRIQ) is cleaved from the precursor. C81 and C86 are joined by a disulfide.

It belongs to the calcitonin family.

It localises to the secreted. Its function is as follows. Stimulates cAMP production via the calcitonin receptor (CT) but not via the CT-like (CL) receptor. This chain is Calcitonin receptor-stimulating peptide 1 (CRSP1), found in Ovis aries (Sheep).